The following is a 344-amino-acid chain: Dihydroorotase (344 aa).

Residues His13 and His15 each coordinate Zn(2+). Substrate-binding positions include 15–17 (HVR) and Asn41. Zn(2+) contacts are provided by Lys99, His136, and His174. Lys99 carries the post-translational modification N6-carboxylysine. His136 contacts substrate. A substrate-binding site is contributed by Leu219. Asp247 is a Zn(2+) binding site. The active site involves Asp247. Residues His251 and Ala263 each contribute to the substrate site.

It belongs to the metallo-dependent hydrolases superfamily. DHOase family. Class II DHOase subfamily. Homodimer. It depends on Zn(2+) as a cofactor.

The enzyme catalyses (S)-dihydroorotate + H2O = N-carbamoyl-L-aspartate + H(+). It functions in the pathway pyrimidine metabolism; UMP biosynthesis via de novo pathway; (S)-dihydroorotate from bicarbonate: step 3/3. Catalyzes the reversible cyclization of carbamoyl aspartate to dihydroorotate. The chain is Dihydroorotase from Aromatoleum aromaticum (strain DSM 19018 / LMG 30748 / EbN1) (Azoarcus sp. (strain EbN1)).